A 565-amino-acid polypeptide reads, in one-letter code: uncharacterized protein (565 aa).

10 helical membrane-spanning segments follow: residues 28 to 48 (IFHFYIYCILLGAVLLFLPFA), 73 to 93 (ASYGFLDALFLAVSAFSDTGL), 109 to 129 (VLAILLQLGGIGFVVIAFLVW), 169 to 189 (LFLFMVELLYGFLYTILFYFI), 262 to 282 (IVIQWLAISQIIFGGIGYPVL), 315 to 335 (LIVTAWCFLMLLMVEFIVITS), 364 to 384 (SLIFGPIPAASRVMQLWFGVI), 393 to 413 (VFPWSAESDIIKGIMVIAMFI), 461 to 481 (AFLVAVFGLVSVVLIAILLPL), and 526 to 546 (TLGLLMIMGQVGVSSSVLTFV).

It belongs to the TrkH potassium transport family.

It localises to the cell membrane. This is an uncharacterized protein from Mycoplasma pneumoniae (strain ATCC 29342 / M129 / Subtype 1) (Mycoplasmoides pneumoniae).